A 309-amino-acid polypeptide reads, in one-letter code: MLEINKDRIKGIVLALKANYYIVQIDTINLIPELFKKKIGDHNFRLLCTKRSRLSYKGHSVSVGDFVLIEAIDWTAETGVISFVEPRKNLITRPPVANVTDVIIVVSLLDPSFDLNQVSRFLMKAEETGLKVTIVLTKRDLIDEKILEKYDKKLQTWGYQPIPISIVNGEGIQKLSARLKSMKLGVLCGPSGVGKSSLINYLLPKISIPIGKLSKKLKRGRHTTRHVELFSIYSDSFIADTPGFNKPEFYTEPSQVPQLFPELRSQLLIKKCKFRNCMHLNEPDCAISRDWERYSNYKNFLQEMLNYHH.

The CP-type G domain occupies Lys-88–Pro-247. Residues Thr-137 to Asp-140 and Gly-189 to Ser-197 each bind GTP. Positions 272, 277, 279, and 285 each coordinate Zn(2+).

Belongs to the TRAFAC class YlqF/YawG GTPase family. RsgA subfamily. As to quaternary structure, monomer. Associates with 30S ribosomal subunit, binds 16S rRNA. Zn(2+) serves as cofactor.

It localises to the cytoplasm. In terms of biological role, one of several proteins that assist in the late maturation steps of the functional core of the 30S ribosomal subunit. Helps release RbfA from mature subunits. May play a role in the assembly of ribosomal proteins into the subunit. Circularly permuted GTPase that catalyzes slow GTP hydrolysis, GTPase activity is stimulated by the 30S ribosomal subunit. In Prochlorococcus marinus (strain SARG / CCMP1375 / SS120), this protein is Small ribosomal subunit biogenesis GTPase RsgA.